Here is a 178-residue protein sequence, read N- to C-terminus: Interleukin-10 (178 aa).

The first 18 residues, 1–18, serve as a signal peptide directing secretion; that stretch reads MHSSALLCYLVFLAGVGA. 2 disulfide bridges follow: Cys30–Cys126 and Cys80–Cys132. N-linked (GlcNAc...) asparagine glycosylation occurs at Asn67. Residue Asn134 is glycosylated (N-linked (GlcNAc...) asparagine).

The protein belongs to the IL-10 family. As to quaternary structure, homodimer. Interacts with IL10RA and IL10RB.

The protein localises to the secreted. In terms of biological role, major immune regulatory cytokine that acts on many cells of the immune system where it has profound anti-inflammatory functions, limiting excessive tissue disruption caused by inflammation. Mechanistically, IL10 binds to its heterotetrameric receptor comprising IL10RA and IL10RB leading to JAK1 and STAT2-mediated phosphorylation of STAT3. In turn, STAT3 translocates to the nucleus where it drives expression of anti-inflammatory mediators. Targets antigen-presenting cells (APCs) such as macrophages and monocytes and inhibits their release of pro-inflammatory cytokines including granulocyte-macrophage colony-stimulating factor /GM-CSF, granulocyte colony-stimulating factor/G-CSF, IL-1 alpha, IL-1 beta, IL-6, IL-8 and TNF-alpha. Also interferes with antigen presentation by reducing the expression of MHC-class II and co-stimulatory molecules, thereby inhibiting their ability to induce T cell activation. In addition, controls the inflammatory response of macrophages by reprogramming essential metabolic pathways including mTOR signaling. The protein is Interleukin-10 (IL10) of Equus caballus (Horse).